Here is a 233-residue protein sequence, read N- to C-terminus: C-type lectin domain-containing protein 87 (233 aa).

A signal peptide spans 1-20 (MRFFRFLVFPVIAGLSSVLA). A glycan (N-linked (GlcNAc...) asparagine) is linked at Asn-26. O-linked (Xyl...) (chondroitin sulfate) serine glycosylation occurs at Ser-32. The N-linked (GlcNAc...) asparagine glycan is linked to Asn-81. The region spanning 93–223 (FADSCYWIET…CTYLLYSICE (131 aa)) is the C-type lectin domain. 2 disulfides stabilise this stretch: Cys-114-Cys-222 and Cys-193-Cys-214. Asn-225 carries N-linked (GlcNAc...) asparagine glycosylation.

The sequence is that of C-type lectin domain-containing protein 87 from Caenorhabditis briggsae.